A 1091-amino-acid chain; its full sequence is Protein JSN1 (1091 aa).

Disordered stretches follow at residues 31–51 (EYENNGESNSQLQQQPQKLGS) and 75–131 (HHSK…GSLT). The segment covering 99–111 (TVASKTPRASPSR) has biased composition (polar residues). A Phosphoserine modification is found at S129. T131 is modified (phosphothreonine). A phosphoserine mark is found at S160 and S168. Positions 340 to 426 (NTISISNVFP…APSKISFAKI (87 aa)) constitute an RRM domain. Composition is skewed to low complexity over residues 482–494 (QQSQQSQHQNHSS) and 507–520 (NNNNSMHGNNNNSA). 2 disordered regions span residues 482–534 (QQSQ…PPPN) and 568–591 (HKGTSDTQNFGPLPEPLSGREFDP). The PUM-HD domain maps to 557–913 (QINSLIKKSL…RLLEEVGLAS (357 aa)). Over residues 568–577 (HKGTSDTQNF) the composition is skewed to polar residues. Pumilio repeat units follow at residues 617–652 (AMLDELPELSSDYLGNTIVQKLFEHSSDIIKDIMLR), 653–689 (KTSKYLTSMGVHKNGTWACQKMITMAHTPRQIMQVTQ), 690–724 (GVKDYCTPLINDQFGNYVIQCVLKFGFPWNQFIFE), 725–760 (SIIANFWVIVQNRYGARAVRACLEAHDIVTPEQSIV), and 801–837 (RLTKRIVELCGHRLASLTILKVLNYRGDDNARKIILD). The interval 911–981 (LASPSSTHNK…GSSASTLSPG (71 aa)) is disordered. At S913 the chain carries Phosphoserine. Low complexity-rich tracts occupy residues 915–935 (SSTHNKTKQQQQQHHNSSISH) and 951–979 (SVSSVKSGGSKHTTMNTTTTNGSSASTLS).

The protein is Protein JSN1 (JSN1) of Saccharomyces cerevisiae (strain ATCC 204508 / S288c) (Baker's yeast).